A 388-amino-acid polypeptide reads, in one-letter code: Palmitoyltransferase ZDHHC18 (388 aa).

The interval 1–67 is disordered; the sequence is MKDCEYQQIS…GSGSLGRRPR (67 aa). Residues 1 to 90 are Cytoplasmic-facing; that stretch reads MKDCEYQQIS…CGGRLMLAGH (90 aa). Residues 10 to 27 are compositionally biased toward low complexity; the sequence is SPGAAPLPASPGARRPGP. Residue serine 19 is modified to Phosphoserine. Pro residues predominate over residues 28 to 46; the sequence is AASPTPGPGPAPPAAPAPP. Residues 91-111 traverse the membrane as a helical segment; the sequence is GGVFALTLLLILTTTGLFFVF. Topologically, residues 112 to 119 are lumenal; that stretch reads DCPYLARK. A helical membrane pass occupies residues 120-140; sequence LTLAIPIIAAILFFFVMSCLL. Over 141-235 the chain is Cytoplasmic; it reads QTSFTDPGIL…GNCVGRRNYR (95 aa). The DHHC domain occupies 192 to 242; that stretch reads KYCFTCKMFRPPRTSHCSVCDNCVERFDHHCPWVGNCVGRRNYRFFYAFIL. Residue cysteine 222 is the S-palmitoyl cysteine intermediate of the active site. Residues 236 to 256 form a helical membrane-spanning segment; it reads FFYAFILSLSFLTAFIFACVV. Topologically, residues 257 to 277 are lumenal; sequence THLTLRAQGSNFLSTLKETPA. Residues 278-298 traverse the membrane as a helical segment; the sequence is SVLELVICFFSIWSILGLSGF. At 299–388 the chain is on the cytoplasmic side; that stretch reads HTYLVASNLT…PDASMVGGHP (90 aa). The segment at 364–388 is disordered; it reads LPSPIRSDEPACRAKPDASMVGGHP. The segment covering 369–379 has biased composition (basic and acidic residues); that stretch reads RSDEPACRAKP.

The protein belongs to the DHHC palmitoyltransferase family. ERF2/ZDHHC9 subfamily. As to expression, widely expressed.

The protein resides in the golgi apparatus membrane. The enzyme catalyses L-cysteinyl-[protein] + hexadecanoyl-CoA = S-hexadecanoyl-L-cysteinyl-[protein] + CoA. Palmitoyltransferase that catalyzes the addition of palmitate onto various protein substrates, such as CGAS, HRAS and LCK. Acts as a negative regulator of the cGAS-STING pathway be mediating palmitoylation and inactivation of CGAS. May also have a palmitoyltransferase activity toward the beta-2 adrenergic receptor/ADRB2 and therefore regulate G protein-coupled receptor signaling. This Homo sapiens (Human) protein is Palmitoyltransferase ZDHHC18.